The sequence spans 448 residues: MTISSRAEPLSISQLNLDAQGLLESSFPLIWLQGELSNFSRPASGHWYFSLKDTRAQINGAMFRNRNRLLNFAPQNGEQVLVRAKITLYVPRGNFQIVVEHMEPAGQGALKAQFDALKAQLQSEGLFAQEHKRTLPAWPNQIGVITSPSGAAIRDILQVLQRRCPSIPVLIYPAAVQGAEAPAQLRQALALAVARNECDVLILGRGGGSLEDLWAFNDEGLARAVANCPIPIVSAVGHEVDTGLTDFAADLRAPTPSAAAELVSPDLSIVSQRLAGLHRRLRWVMAQELRTVQERLRHLSQRLRSPRQHLEQSSQRLDELQNRLQRQMQHRLTLLQGRLQPSQQRLARLSPQRLLVERQQRLATLSKRLPQPILRQLQQQQLQLAGLSKRLHTASPLETLARGYSITFKGNQAVRSVEQLQAGDTLTTRLADGEIIARVEHVQVSDTD.

It belongs to the XseA family. In terms of assembly, heterooligomer composed of large and small subunits.

The protein resides in the cytoplasm. It catalyses the reaction Exonucleolytic cleavage in either 5'- to 3'- or 3'- to 5'-direction to yield nucleoside 5'-phosphates.. Bidirectionally degrades single-stranded DNA into large acid-insoluble oligonucleotides, which are then degraded further into small acid-soluble oligonucleotides. The protein is Exodeoxyribonuclease 7 large subunit of Alcanivorax borkumensis (strain ATCC 700651 / DSM 11573 / NCIMB 13689 / SK2).